A 307-amino-acid chain; its full sequence is Oxygen-dependent coproporphyrinogen-III oxidase (307 aa).

S99 is a binding site for substrate. A divalent metal cation-binding residues include H103 and H113. The active-site Proton donor is H113. Position 115–117 (115–117 (NVR)) interacts with substrate. The a divalent metal cation site is built by H152 and H182. Residues 247-282 (YVEFNLVFDRGTLFGLQSGGRTESILMSMPPVVNWR) are important for dimerization. Substrate is bound at residue 265–267 (GGR).

Belongs to the aerobic coproporphyrinogen-III oxidase family. Homodimer. A divalent metal cation serves as cofactor.

It is found in the cytoplasm. The enzyme catalyses coproporphyrinogen III + O2 + 2 H(+) = protoporphyrinogen IX + 2 CO2 + 2 H2O. It participates in porphyrin-containing compound metabolism; protoporphyrin-IX biosynthesis; protoporphyrinogen-IX from coproporphyrinogen-III (O2 route): step 1/1. Involved in the heme biosynthesis. Catalyzes the aerobic oxidative decarboxylation of propionate groups of rings A and B of coproporphyrinogen-III to yield the vinyl groups in protoporphyrinogen-IX. This Paraburkholderia phytofirmans (strain DSM 17436 / LMG 22146 / PsJN) (Burkholderia phytofirmans) protein is Oxygen-dependent coproporphyrinogen-III oxidase.